A 359-amino-acid polypeptide reads, in one-letter code: tRNA-specific 2-thiouridylase MnmA (359 aa).

Residues 7–14 (GLSGGVDS) and leucine 33 contribute to the ATP site. The active-site Nucleophile is cysteine 94. Cysteine 94 and cysteine 193 are joined by a disulfide. Glycine 119 serves as a coordination point for ATP. The interval 143–145 (KDQ) is interaction with tRNA. Cysteine 193 serves as the catalytic Cysteine persulfide intermediate. The interaction with tRNA stretch occupies residues 298–299 (RY).

This sequence belongs to the MnmA/TRMU family.

The protein resides in the cytoplasm. It carries out the reaction S-sulfanyl-L-cysteinyl-[protein] + uridine(34) in tRNA + AH2 + ATP = 2-thiouridine(34) in tRNA + L-cysteinyl-[protein] + A + AMP + diphosphate + H(+). Its function is as follows. Catalyzes the 2-thiolation of uridine at the wobble position (U34) of tRNA, leading to the formation of s(2)U34. The polypeptide is tRNA-specific 2-thiouridylase MnmA (Trichodesmium erythraeum (strain IMS101)).